The primary structure comprises 75 residues: Large ribosomal subunit protein bL31 (75 aa).

This sequence belongs to the bacterial ribosomal protein bL31 family. Type A subfamily. Part of the 50S ribosomal subunit.

Its function is as follows. Binds the 23S rRNA. The chain is Large ribosomal subunit protein bL31 from Chlorobium phaeovibrioides (strain DSM 265 / 1930) (Prosthecochloris vibrioformis (strain DSM 265)).